Reading from the N-terminus, the 1042-residue chain is Ubiquitin carboxyl-terminal hydrolase 38 (1042 aa).

The USP domain occupies 445–949; the sequence is TGLINLGNTC…TAYVLLYKKQ (505 aa). Residue Cys454 is the Nucleophile of the active site. Residue His857 is the Proton acceptor of the active site.

Belongs to the peptidase C19 family. As to quaternary structure, interacts with isoform 1 of FBXW7; this interaction prevents FBXW7-mediated degradation of MYC. As to expression, highly expressed in skeletal muscle. Expressed in adrenal gland.

Its subcellular location is the cytoplasm. It localises to the nucleus. The enzyme catalyses Thiol-dependent hydrolysis of ester, thioester, amide, peptide and isopeptide bonds formed by the C-terminal Gly of ubiquitin (a 76-residue protein attached to proteins as an intracellular targeting signal).. Deubiquitinating enzyme that plays a role in various cellular processes, including DNA repair, cell cycle regulation, and immune response. Plays a role in the inhibition of type I interferon signaling by mediating the 'Lys-33' to 'Lys-48' ubiquitination transition of TBK1 leading to its degradation. Cleaves the ubiquitin chain from the histone demethylase LSD1/KDM1A and prevents it from degradation by the 26S proteasome, thus maintaining LSD1 protein level in cells. Plays a role in the DNA damage response by regulating the deacetylase activity of HDAC1. Mechanistically, removes the 'Lys-63'-linked ubiquitin chain promoting the deacetylase activity of HDAC1 in response to DNA damage. Also acts as a specific deubiquitinase of histone deacetylase 3/HDAC3 and cleaves its 'Lys-63'-linked ubiquitin chains to lower its histone deacetylase activity. Regulates MYC levels and cell proliferation via antagonizing ubiquitin E3 ligase FBXW7 thereby preventing MYC 'Lys-48'-linked ubiquitination and degradation. Participates in antiviral response by removing both 'Lys-48'-linked and 'Lys-63'-linked polyubiquitination of Zika virus envelope protein E. Constitutively associated with IL-33R/IL1RL1, deconjugates its 'Lys-27'-linked polyubiquitination resulting in its autophagic degradation. The sequence is that of Ubiquitin carboxyl-terminal hydrolase 38 (USP38) from Homo sapiens (Human).